Consider the following 589-residue polypeptide: TAF5-like RNA polymerase II p300/CBP-associated factor-associated factor 65 kDa subunit 5L (589 aa).

Polar residues predominate over residues A211–N221. The interval A211–S230 is disordered. 6 WD repeats span residues N266 to E305, G340 to L379, G382 to I421, G424 to L463, G466 to E505, and G508 to P547.

The protein belongs to the WD repeat TAF5 family. In terms of assembly, the PCAF complex is composed of a number of TBP-associated factors (TAFS), such as TAF5, TAF5L, TAF6, TAF6L, TAF9, TAF10 and TAF12, PCAF, and also PCAF-associated factors (PAFs), such as TADA2L/ADA2, TADA3L/ADA3 and SPT3. Component of the STAGA transcription coactivator-HAT complex, at least composed of SUPT3H, GCN5L2, TAF5L, TAF6L, SUPT7L, TADA3L, TAD1L, TAF10, TAF12, TRRAP and TAF9.

It is found in the nucleus. Functionally, functions as a component of the PCAF complex. The PCAF complex is capable of efficiently acetylating histones in a nucleosomal context. The PCAF complex could be considered as the human version of the yeast SAGA complex. With TAF6L, acts as an epigenetic regulator essential for somatic reprogramming. Regulates target genes through H3K9ac deposition and MYC recruitment which trigger MYC regulatory network to orchestrate gene expression programs to control embryonic stem cell state. This is TAF5-like RNA polymerase II p300/CBP-associated factor-associated factor 65 kDa subunit 5L from Homo sapiens (Human).